A 254-amino-acid chain; its full sequence is Short-chain dehydrogenase/reductase SDRA (254 aa).

An NADP(+)-binding site is contributed by 15–39 (IVTASTQGIGFGITERFGLEGASVV). S146 contributes to the substrate binding site. Y159 (proton acceptor) is an active-site residue. A Microbody targeting signal motif is present at residues 252–254 (SRL).

The protein belongs to the short-chain dehydrogenases/reductases (SDR) family.

The protein resides in the peroxisome. Its function is as follows. Involved with IBR3 and IBR10 in the peroxisomal beta-oxidation of indole-3-butyric acid (IBA) to form indole-3-acetic acid (IAA), a biologically active auxin. May be responsible for catalyzing the dehydrogenation step in the conversion of IBA. May be involved in the peroxisomal activation of 2,4-dichlorophenoxybutyric acid (2,4-DB), a precursor of active auxins that inhibit root growth. The chain is Short-chain dehydrogenase/reductase SDRA from Arabidopsis thaliana (Mouse-ear cress).